The primary structure comprises 262 residues: Trypsin eta (262 aa).

Positions 1–22 are cleaved as a signal peptide; it reads MNKVILRILAVLFLLGIYAVSA. A propeptide spans 23–27 (activation peptide); the sequence is QSDGR. Residues 28 to 259 form the Peptidase S1 domain; sequence IVGGADTSSY…YKDWIAKQRT (232 aa). Cysteine 59 and cysteine 75 form a disulfide bridge. Residues histidine 74 and aspartate 120 each act as charge relay system in the active site. 2 disulfides stabilise this stretch: cysteine 185–cysteine 200 and cysteine 211–cysteine 235. The active-site Charge relay system is serine 215.

Belongs to the peptidase S1 family.

Its subcellular location is the secreted. It is found in the extracellular space. The enzyme catalyses Preferential cleavage: Arg-|-Xaa, Lys-|-Xaa.. This is Trypsin eta (etaTry) from Drosophila melanogaster (Fruit fly).